The primary structure comprises 88 residues: Eclosion hormone (88 aa).

Positions 1–26 (MAGKVTVAFFMFAMIAFLANFGYVEC) are cleaved as a signal peptide. 3 cysteine pairs are disulfide-bonded: Cys-40–Cys-64, Cys-44–Cys-60, and Cys-47–Cys-75.

This sequence belongs to the insect eclosion hormone family.

It localises to the secreted. Functionally, neuropeptide that triggers the performance of ecdysis behaviors at the end of a molt. It triggers adult behavior patterns: larval, pupal and adult ecdysis, and plasticization during the molt. The polypeptide is Eclosion hormone (Manduca sexta (Tobacco hawkmoth)).